The chain runs to 402 residues: NAD-dependent protein deacetylase sirtuin-7 (402 aa).

2 disordered regions span residues 1-25 and 59-78; these read MAAG…REEQ and VTEL…RQEE. A compositionally biased stretch (basic and acidic residues) spans 9 to 25; the sequence is RSERKAAERVRRLREEQ. Residues 83-330 form the Deacetylase sirtuin-type domain; the sequence is PEELRRKVRE…RLLMDELGLE (248 aa). NAD(+) contacts are provided by residues 108–127 and 168–171; these read GAGI…NGVW and QNCD. His188 functions as the Proton acceptor in the catalytic mechanism. Zn(2+) contacts are provided by Cys196, Cys199, Cys226, and Cys229. NAD(+)-binding positions include 269 to 271, 298 to 300, and Cys316; these read GSS and NLQ. Positions 355 to 385 are disordered; that stretch reads SHSRKSLCRSREEPPPGDQSAPLASATPILG. Arg390 is modified (asymmetric dimethylarginine; alternate). Residue Arg390 is modified to Omega-N-methylarginine; alternate.

The protein belongs to the sirtuin family. Class IV subfamily. As to quaternary structure, interacts with UBTF and the RNA polymerase I complex. Interacts with components of the B-WICH complex, such as MYBBP1A, SMARCA5/SNF2H and BAZ1B/WSTF. Interacts with ELK4, leading to stabilization at target promoters for H3K18Ac deacetylation. Interacts with histone H2A and/or histone H2B. Interacts with DNMT1. Interacts with SIRT1. Requires Zn(2+) as cofactor. Post-translationally, phosphorylated during mitosis. In terms of processing, methylation at Arg-390 by PRMT6 inhibits the H3K18Ac histone deacetylase activity, promoting mitochondria biogenesis and maintaining mitochondria respiration. Ubiquitinated via 'Lys-63'-linked ubiquitin chains. Deubiquitinated by USP7, inhibiting the H3K18Ac histone deacetylase activity and regulating gluconeogenesis. Ubiquitinated by E3 ubiquitin-protein ligase complex containing FBXO7; leading to proteasomal degradation.

The protein resides in the nucleus. It is found in the nucleolus. The protein localises to the nucleoplasm. Its subcellular location is the chromosome. It localises to the cytoplasm. It carries out the reaction N(6)-acetyl-L-lysyl-[protein] + NAD(+) + H2O = 2''-O-acetyl-ADP-D-ribose + nicotinamide + L-lysyl-[protein]. The catalysed reaction is N(6)-glutaryl-L-lysyl-[protein] + NAD(+) + H2O = 2''-O-glutaryl-ADP-D-ribose + nicotinamide + L-lysyl-[protein]. It catalyses the reaction N(6)-succinyl-L-lysyl-[protein] + NAD(+) + H2O = 2''-O-succinyl-ADP-D-ribose + nicotinamide + L-lysyl-[protein]. The enzyme catalyses N(6)-propanoyl-L-lysyl-[protein] + NAD(+) + H2O = 3''-O-propanoyl-ADP-D-ribose + nicotinamide + L-lysyl-[protein]. It carries out the reaction N(6)-decanoyl-L-lysyl-[protein] + NAD(+) + H2O = 2''-O-decanoyl-ADP-D-ribose + nicotinamide + L-lysyl-[protein]. NAD-dependent protein-lysine deacetylase and deacylase activities are activated by nucleic acids. Histone deacetylase activity is activated by DNA. Protein-lysine deacylase activity is activated by RNA. H3K18Ac histone deacetylase activity is inhibited by methylation at Arg-390. H3K18Ac histone deacetylase activity is inhibited by deubiquitination by USP7. Its function is as follows. NAD-dependent protein-lysine deacylase that can act both as a deacetylase or deacylase (desuccinylase, depropionylase, deglutarylase and dedecanoylase), depending on the context. Specifically mediates deacetylation of histone H3 at 'Lys-18' (H3K18Ac). In contrast to other histone deacetylases, displays strong preference for a specific histone mark, H3K18Ac, directly linked to control of gene expression. H3K18Ac is mainly present around the transcription start site of genes and has been linked to activation of nuclear hormone receptors; SIRT7 thereby acts as a transcription repressor. Moreover, H3K18 hypoacetylation has been reported as a marker of malignancy in various cancers and seems to maintain the transformed phenotype of cancer cells. Also able to mediate deacetylation of histone H3 at 'Lys-36' (H3K36Ac) in the context of nucleosomes. Also mediates deacetylation of non-histone proteins, such as ATM, CDK9, DDX21, DDB1, FBL, FKBP5/FKBP51, GABPB1, RAN, RRP9/U3-55K and POLR1E/PAF53. Enriched in nucleolus where it stimulates transcription activity of the RNA polymerase I complex. Acts by mediating the deacetylation of the RNA polymerase I subunit POLR1E/PAF53, thereby promoting the association of RNA polymerase I with the rDNA promoter region and coding region. In response to metabolic stress, SIRT7 is released from nucleoli leading to hyperacetylation of POLR1E/PAF53 and decreased RNA polymerase I transcription. Required to restore the transcription of ribosomal RNA (rRNA) at the exit from mitosis. Promotes pre-ribosomal RNA (pre-rRNA) cleavage at the 5'-terminal processing site by mediating deacetylation of RRP9/U3-55K, a core subunit of the U3 snoRNP complex. Mediates 'Lys-37' deacetylation of Ran, thereby regulating the nuclear export of NF-kappa-B subunit RELA/p65. Acts as a regulator of DNA damage repair by mediating deacetylation of ATM during the late stages of DNA damage response, promoting ATM dephosphorylation and deactivation. Suppresses the activity of the DCX (DDB1-CUL4-X-box) E3 ubiquitin-protein ligase complexes by mediating deacetylation of DDB1, which prevents the interaction between DDB1 and CUL4 (CUL4A or CUL4B). Activates RNA polymerase II transcription by mediating deacetylation of CDK9, thereby promoting 'Ser-2' phosphorylation of the C-terminal domain (CTD) of RNA polymerase II. Deacetylates FBL, promoting histone-glutamine methyltransferase activity of FBL. Acts as a regulator of mitochondrial function by catalyzing deacetylation of GABPB1. Regulates Akt/AKT1 activity by mediating deacetylation of FKBP5/FKBP51. Required to prevent R-loop-associated DNA damage and transcription-associated genomic instability by mediating deacetylation and subsequent activation of DDX21, thereby overcoming R-loop-mediated stalling of RNA polymerases. In addition to protein deacetylase activity, also acts as a protein-lysine deacylase. Acts as a protein depropionylase by mediating depropionylation of Osterix (SP7), thereby regulating bone formation by osteoblasts. Acts as a histone deglutarylase by mediating deglutarylation of histone H4 on 'Lys-91' (H4K91glu); a mark that destabilizes nucleosomes by promoting dissociation of the H2A-H2B dimers from nucleosomes. Acts as a histone desuccinylase: in response to DNA damage, recruited to DNA double-strand breaks (DSBs) and catalyzes desuccinylation of histone H3 on 'Lys-122' (H3K122succ), thereby promoting chromatin condensation and DSB repair. Also promotes DSB repair by promoting H3K18Ac deacetylation, regulating non-homologous end joining (NHEJ). Along with its role in DNA repair, required for chromosome synapsis during prophase I of female meiosis by catalyzing H3K18Ac deacetylation. Involved in transcriptional repression of LINE-1 retrotransposon via H3K18Ac deacetylation, and promotes their association with the nuclear lamina. Required to stabilize ribosomal DNA (rDNA) heterochromatin and prevent cellular senescence induced by rDNA instability. Acts as a negative regulator of SIRT1 by preventing autodeacetylation of SIRT1, restricting SIRT1 deacetylase activity. The protein is NAD-dependent protein deacetylase sirtuin-7 of Rattus norvegicus (Rat).